A 123-amino-acid polypeptide reads, in one-letter code: Unclassified hydrophobin 9 (123 aa).

An N-terminal signal peptide occupies residues 1 to 24 (MFFFNTKPIVFLVVLSVVATFAAA). 4 cysteine pairs are disulfide-bonded: cysteine 37-cysteine 103, cysteine 45-cysteine 97, cysteine 46-cysteine 88, and cysteine 104-cysteine 117.

This sequence belongs to the fungal hydrophobin family. As to quaternary structure, self-assembles to form functional amyloid fibrils called rodlets. Self-assembly into fibrillar rodlets occurs spontaneously at hydrophobic:hydrophilic interfaces and the rodlets further associate laterally to form amphipathic monolayers.

Its subcellular location is the secreted. It is found in the cell wall. Aerial growth, conidiation, and dispersal of filamentous fungi in the environment rely upon a capability of their secreting small amphipathic proteins called hydrophobins (HPBs) with low sequence identity. Class I can self-assemble into an outermost layer of rodlet bundles on aerial cell surfaces, conferring cellular hydrophobicity that supports fungal growth, development and dispersal; whereas Class II form highly ordered films at water-air interfaces through intermolecular interactions but contribute nothing to the rodlet structure. In Pleurotus ostreatus (strain PC15) (Oyster mushroom), this protein is Unclassified hydrophobin 9.